We begin with the raw amino-acid sequence, 378 residues long: tRNA-specific 2-thiouridylase MnmA (378 aa).

ATP is bound by residues 9 to 16 (GVSGGVDS) and methionine 35. The tract at residues 94–96 (NPD) is interaction with target base in tRNA. Catalysis depends on cysteine 99, which acts as the Nucleophile. Cysteine 99 and cysteine 195 are oxidised to a cystine. Glycine 123 is an ATP binding site. Residues 145-147 (KDQ) are interaction with tRNA. The active-site Cysteine persulfide intermediate is cysteine 195. The tract at residues 307–308 (RY) is interaction with tRNA.

This sequence belongs to the MnmA/TRMU family.

It is found in the cytoplasm. It catalyses the reaction S-sulfanyl-L-cysteinyl-[protein] + uridine(34) in tRNA + AH2 + ATP = 2-thiouridine(34) in tRNA + L-cysteinyl-[protein] + A + AMP + diphosphate + H(+). Functionally, catalyzes the 2-thiolation of uridine at the wobble position (U34) of tRNA, leading to the formation of s(2)U34. The polypeptide is tRNA-specific 2-thiouridylase MnmA (Xanthomonas campestris pv. campestris (strain 8004)).